Consider the following 1009-residue polypeptide: DENN domain-containing protein 2A (1009 aa).

Disordered stretches follow at residues Ala-15 to Gln-153, Lys-171 to Ser-334, Lys-434 to Lys-479, and Lys-498 to His-532. Basic and acidic residues-rich tracts occupy residues Asn-45–Val-59, Gln-130–Leu-147, His-218–Leu-247, and His-275–Lys-284. The span at Pro-297–Ser-314 shows a compositional bias: pro residues. The segment covering Lys-434 to Arg-443 has biased composition (basic and acidic residues). A compositionally biased stretch (polar residues) spans Leu-503–Lys-513. Ser-551 carries the post-translational modification Phosphoserine. A uDENN domain is found at Glu-566–Leu-715. One can recognise a cDENN domain in the interval Arg-737 to Glu-870. The dDENN domain occupies Arg-872–Ala-969.

The protein localises to the cytoplasm. It localises to the cytoskeleton. Its function is as follows. Guanine nucleotide exchange factor (GEF) which may activate RAB9A and RAB9B. Promotes the exchange of GDP to GTP, converting inactive GDP-bound Rab proteins into their active GTP-bound form. May play a role in late endosomes back to trans-Golgi network/TGN transport. The polypeptide is DENN domain-containing protein 2A (DENND2A) (Homo sapiens (Human)).